The following is a 69-amino-acid chain: Antimicrobial peptide ISAMP (69 aa).

Positions 1-23 (MRAVAIFIVTLLVLECVYFVMSE) are cleaved as a signal peptide.

In terms of tissue distribution, expressed in the fat body, hemocytes and salivary glands of partially-fed female ticks. Not expressed in the midgut.

It localises to the secreted. Its function is as follows. Has antimicrobial activity against B.cereus (MIC=5.8 ug/ml), B.subtilis (MIC=12.3 ug/ml), S.aureus (MIC=10.4 ug/ml), E.coli Edl 933 (MIC=3.2 ug/ml) and E.coli MG/655 (MIC=4.2 ug/ml). Non-hemolytic. The chain is Antimicrobial peptide ISAMP from Ixodes scapularis (Black-legged tick).